We begin with the raw amino-acid sequence, 64 residues long: Large ribosomal subunit protein bL28C (64 aa).

The protein belongs to the bacterial ribosomal protein bL28 family.

In Mycobacterium tuberculosis (strain ATCC 25618 / H37Rv), this protein is Large ribosomal subunit protein bL28C.